The following is a 503-amino-acid chain: Cytochrome P450 11B1, mitochondrial (503 aa).

Residues 1–24 (MAIWAKAEAWLAGPWLALNRARTL) constitute a mitochondrion transit peptide. Cysteine 450 contacts heme.

Belongs to the cytochrome P450 family. It depends on heme as a cofactor.

Its subcellular location is the mitochondrion inner membrane. It carries out the reaction a steroid + 2 reduced [adrenodoxin] + O2 + 2 H(+) = an 11beta-hydroxysteroid + 2 oxidized [adrenodoxin] + H2O. The catalysed reaction is 11-deoxycortisol + 2 reduced [adrenodoxin] + O2 + 2 H(+) = cortisol + 2 oxidized [adrenodoxin] + H2O. It catalyses the reaction 21-hydroxyprogesterone + 2 reduced [adrenodoxin] + O2 + 2 H(+) = corticosterone + 2 oxidized [adrenodoxin] + H2O. The enzyme catalyses corticosterone + 2 reduced [adrenodoxin] + O2 + 2 H(+) = 18-hydroxycorticosterone + 2 oxidized [adrenodoxin] + H2O. It carries out the reaction 18-hydroxycorticosterone + 2 reduced [adrenodoxin] + O2 + 2 H(+) = aldosterone + 2 oxidized [adrenodoxin] + 2 H2O. The catalysed reaction is 21-hydroxyprogesterone + 2 reduced [adrenodoxin] + O2 + 2 H(+) = 19-hydroxy-11-deoxycorticosterone + 2 oxidized [adrenodoxin] + H2O. It catalyses the reaction 19-hydroxy-11-deoxycorticosterone + 2 reduced [adrenodoxin] + O2 + 2 H(+) = 19-oxo-11-deoxycorticosterone + 2 oxidized [adrenodoxin] + 2 H2O. Its pathway is steroid biosynthesis; glucocorticoid biosynthesis. The protein operates within steroid hormone biosynthesis. Its function is as follows. A cytochrome P450 monooxygenase that catalyzes the biosynthesis of aldosterone and other adrenal corticoids. Differing from other species (such as human, rat and mice), it is able to catalyze three sequential oxidative reactions of 11-deoxycorticosterone (21-hydroxyprogesterone), namely 11-beta hydroxylation, followed by two successive oxidations at C18 yielding 18-hydroxy and then 18-oxo intermediates, and ending with the formation of aldosterone. Steroid 11beta, 18- and 19-hydroxylase. Mechanistically, uses molecular oxygen inserting one oxygen atom into a substrate and reducing the second into a water molecule. Two electrons are provided by NADPH via a two-protein mitochondrial transfer system comprising flavoprotein FDXR (adrenodoxin/ferredoxin reductase) and nonheme iron-sulfur protein FDX1 or FDX2 (adrenodoxin/ferredoxin). In Sus scrofa (Pig), this protein is Cytochrome P450 11B1, mitochondrial (CYP11B1).